Consider the following 200-residue polypeptide: Large ribosomal subunit protein uL4 (200 aa).

The segment at 42 to 65 (TRAQKTRSEVSGGGAKPWRQKGTG) is disordered.

This sequence belongs to the universal ribosomal protein uL4 family. As to quaternary structure, part of the 50S ribosomal subunit.

Functionally, one of the primary rRNA binding proteins, this protein initially binds near the 5'-end of the 23S rRNA. It is important during the early stages of 50S assembly. It makes multiple contacts with different domains of the 23S rRNA in the assembled 50S subunit and ribosome. Its function is as follows. Forms part of the polypeptide exit tunnel. This chain is Large ribosomal subunit protein uL4, found in Vibrio cholerae serotype O1 (strain ATCC 39541 / Classical Ogawa 395 / O395).